Here is a 121-residue protein sequence, read N- to C-terminus: DNA-directed RNA polymerase subunit omega (121 aa).

Residues 95-121 (DGDAANDLQGEEDDLGLGLDEAEDLGF) form a disordered region. The segment covering 103-121 (QGEEDDLGLGLDEAEDLGF) has biased composition (acidic residues).

It belongs to the RNA polymerase subunit omega family. In terms of assembly, the RNAP catalytic core consists of 2 alpha, 1 beta, 1 beta' and 1 omega subunit. When a sigma factor is associated with the core the holoenzyme is formed, which can initiate transcription.

It carries out the reaction RNA(n) + a ribonucleoside 5'-triphosphate = RNA(n+1) + diphosphate. Functionally, promotes RNA polymerase assembly. Latches the N- and C-terminal regions of the beta' subunit thereby facilitating its interaction with the beta and alpha subunits. The polypeptide is DNA-directed RNA polymerase subunit omega (Magnetococcus marinus (strain ATCC BAA-1437 / JCM 17883 / MC-1)).